A 462-amino-acid chain; its full sequence is CUGBP Elav-like family member 3-B (462 aa).

RRM domains follow at residues 7 to 88 (IKLF…PADS), 95 to 175 (RKLF…FADT), and 377 to 455 (CNIF…LKRP).

The protein belongs to the CELF/BRUNOL family.

It localises to the nucleus. It is found in the cytoplasm. RNA-binding protein that may be involved in the regulation of pre-mRNA alternative splicing. This Xenopus laevis (African clawed frog) protein is CUGBP Elav-like family member 3-B (tnrc4-b).